The chain runs to 436 residues: Two-pore potassium channel 3 (436 aa).

The Cytoplasmic segment spans residues 1 to 148 (MANEGSDPLL…QKDPTETSRS (148 aa)). Residues 62–117 (SHFIDSMKQPSPSSSSTAVNNPFSDSSTLDPLLPPPPPQPEPWLSDQTSSHCQGHA) form a disordered region. The segment covering 71 to 92 (PSPSSSSTAVNNPFSDSSTLDP) has biased composition (low complexity). Residues 93–102 (LLPPPPPQPE) show a composition bias toward pro residues. Residues 149–169 (VVRQAFALLVVYLSLGVLIYW) traverse the membrane as a helical segment. The segment at residues 185 to 204 (DGLYFCIVTMCTIGYGDITP) is an intramembrane region (pore-forming). A helical membrane pass occupies residues 212–232 (FSIMFVLVGFGFIDILLSGMV). Residues 233 to 274 (SYVLDLQESYMLDSAKRRDEPEKRRSYIIDVKKGRMRIRLKV) are Cytoplasmic-facing. The helical transmembrane segment at 275 to 295 (ALALGVVVLCIAVGVGIMHFI) threads the bilayer. Positions 302-321 (DSFYLSVMSVTTVGYGDRAF) form an intramembrane region, pore-forming. A helical transmembrane segment spans residues 328 to 348 (LFAAIWLLVSTLAVARAFLYL). Residues 349 to 436 (AEARVDKRNR…LDLLEGGSGD (88 aa)) lie on the Cytoplasmic side of the membrane. 2 EF-hand domains span residues 365–400 (LCET…EMEK) and 404–436 (KDIL…GSGD). The Ca(2+) site is built by Asp-378, Asp-380, Asn-382, Cys-384, Glu-389, Asp-417, Asn-421, Lys-423, and Asp-428.

The protein belongs to the two pore domain potassium channel (TC 1.A.1.7) family. Homodimer. As to expression, expressed in roots, cotyledons, stems, hypocotyls, leaves and flowers. Detected in root tips and in mesophyll cells and guard cells of the leaves.

It localises to the vacuole membrane. It is found in the plastid. The protein resides in the chloroplast thylakoid membrane. Inhibited by barium, but not by tetraethylammonium. Its function is as follows. Two-pore potassium channel modulating the proton motive force (pmf) necessary to convert photochemical energy into physiological functions. Mediates the potassium efflux from the thylakoid lumen required for the regulation of the transmembrane electrical potential, the enhancement of the pH gradient for ATP synthesis, the regulation of electron flow, and pH-mediated photoprotective responses. Requires calcium for channel activity. The polypeptide is Two-pore potassium channel 3 (Arabidopsis thaliana (Mouse-ear cress)).